A 276-amino-acid chain; its full sequence is Large ribosomal subunit protein uL2 (276 aa).

A disordered region spans residues 223 to 276 (GAAMNPVDHPHGGGEGRAPRGRPPASPWGWQTKGLKTRKRRKPSSRFIIARRKK). Positions 230–240 (DHPHGGGEGRA) are enriched in basic and acidic residues. Over residues 257-276 (LKTRKRRKPSSRFIIARRKK) the composition is skewed to basic residues.

It belongs to the universal ribosomal protein uL2 family. As to quaternary structure, part of the 50S ribosomal subunit. Forms a bridge to the 30S subunit in the 70S ribosome.

In terms of biological role, one of the primary rRNA binding proteins. Required for association of the 30S and 50S subunits to form the 70S ribosome, for tRNA binding and peptide bond formation. It has been suggested to have peptidyltransferase activity; this is somewhat controversial. Makes several contacts with the 16S rRNA in the 70S ribosome. The protein is Large ribosomal subunit protein uL2 of Thermus thermophilus (strain ATCC BAA-163 / DSM 7039 / HB27).